A 133-amino-acid chain; its full sequence is Napin-1 (133 aa).

2 consecutive propeptides follow at residues 31–49 and 131–133; these read PSWTLDGEFDFEDDMEKQG and PSY.

This sequence belongs to the 2S seed storage albumins family. In terms of assembly, the mature protein consists of a small and a large chain linked by disulfide bonds. In terms of tissue distribution, cotyledons and the axis.

The small, basic, water-soluble napins are one of the two major kinds of storage proteins synthesized in the seed during its maturation. The sequence is that of Napin-1 from Brassica napus (Rape).